The primary structure comprises 154 residues: Myoglobin (154 aa).

Positions 2–148 constitute a Globin domain; it reads VLSEGEWQLV…FRKDIAAKYK (147 aa). At S4 the chain carries Phosphoserine. H65 lines the nitrite pocket. H65 contacts O2. Residue T68 is modified to Phosphothreonine. H94 is a binding site for heme b.

The protein belongs to the globin family. Monomeric.

The protein resides in the cytoplasm. Its subcellular location is the sarcoplasm. The enzyme catalyses Fe(III)-heme b-[protein] + nitric oxide + H2O = Fe(II)-heme b-[protein] + nitrite + 2 H(+). It carries out the reaction H2O2 + AH2 = A + 2 H2O. Its function is as follows. Monomeric heme protein which primary function is to store oxygen and facilitate its diffusion within muscle tissues. Reversibly binds oxygen through a pentacoordinated heme iron and enables its timely and efficient release as needed during periods of heightened demand. Depending on the oxidative conditions of tissues and cells, and in addition to its ability to bind oxygen, it also has a nitrite reductase activity whereby it regulates the production of bioactive nitric oxide. Under stress conditions, like hypoxia and anoxia, it also protects cells against reactive oxygen species thanks to its pseudoperoxidase activity. This chain is Myoglobin (MB), found in Physeter macrocephalus (Sperm whale).